Here is a 59-residue protein sequence, read N- to C-terminus: Putative potassium channel toxin Ts22 (59 aa).

A signal peptide spans 1-22; the sequence is MKAFYGILIIFILISMIDLSQQ. 3 disulfide bridges follow: cysteine 29–cysteine 50, cysteine 35–cysteine 55, and cysteine 39–cysteine 57.

It belongs to the short scorpion toxin superfamily. Potassium channel inhibitor family. Alpha-KTx 04 subfamily. As to expression, expressed by the venom gland.

It is found in the secreted. In terms of biological role, potently blocks voltage-gated potassium channels (Kv). This is Putative potassium channel toxin Ts22 from Tityus serrulatus (Brazilian scorpion).